The following is a 416-amino-acid chain: Leu/Ile/Val-binding protein homolog 4 (416 aa).

Residues Met1–Ala26 form the signal peptide.

It belongs to the leucine-binding protein family.

In terms of biological role, component of an amino-acid transport system. This chain is Leu/Ile/Val-binding protein homolog 4, found in Brucella melitensis biotype 1 (strain ATCC 23456 / CCUG 17765 / NCTC 10094 / 16M).